Reading from the N-terminus, the 368-residue chain is Phospho-N-acetylmuramoyl-pentapeptide-transferase (368 aa).

Helical transmembrane passes span 2–22 (IALI…TPLL), 51–71 (TLGG…SALY), 80–100 (PSWS…LGFI), 117–137 (GGKF…ALLI), 167–187 (VAII…TNAV), 193–213 (LDGL…IIAF), 234–254 (PLDL…FLWY), 271–291 (LGGL…AVVL), and 340–360 (FWMI…GDWV).

This sequence belongs to the glycosyltransferase 4 family. MraY subfamily. Mg(2+) serves as cofactor.

Its subcellular location is the cell membrane. It catalyses the reaction UDP-N-acetyl-alpha-D-muramoyl-L-alanyl-gamma-D-glutamyl-meso-2,6-diaminopimeloyl-D-alanyl-D-alanine + di-trans,octa-cis-undecaprenyl phosphate = di-trans,octa-cis-undecaprenyl diphospho-N-acetyl-alpha-D-muramoyl-L-alanyl-D-glutamyl-meso-2,6-diaminopimeloyl-D-alanyl-D-alanine + UMP. The protein operates within cell wall biogenesis; peptidoglycan biosynthesis. Catalyzes the initial step of the lipid cycle reactions in the biosynthesis of the cell wall peptidoglycan: transfers peptidoglycan precursor phospho-MurNAc-pentapeptide from UDP-MurNAc-pentapeptide onto the lipid carrier undecaprenyl phosphate, yielding undecaprenyl-pyrophosphoryl-MurNAc-pentapeptide, known as lipid I. The chain is Phospho-N-acetylmuramoyl-pentapeptide-transferase from Bifidobacterium longum (strain DJO10A).